A 345-amino-acid polypeptide reads, in one-letter code: Protein RecA (345 aa).

Glycine 66–threonine 73 contributes to the ATP binding site.

The protein belongs to the RecA family.

The protein resides in the cytoplasm. Functionally, can catalyze the hydrolysis of ATP in the presence of single-stranded DNA, the ATP-dependent uptake of single-stranded DNA by duplex DNA, and the ATP-dependent hybridization of homologous single-stranded DNAs. It interacts with LexA causing its activation and leading to its autocatalytic cleavage. This is Protein RecA from Frankia casuarinae (strain DSM 45818 / CECT 9043 / HFP020203 / CcI3).